A 364-amino-acid polypeptide reads, in one-letter code: Histidinol-phosphate aminotransferase 1 (364 aa).

Residue lysine 211 is modified to N6-(pyridoxal phosphate)lysine.

This sequence belongs to the class-II pyridoxal-phosphate-dependent aminotransferase family. Histidinol-phosphate aminotransferase subfamily. Homodimer. Pyridoxal 5'-phosphate is required as a cofactor.

The catalysed reaction is L-histidinol phosphate + 2-oxoglutarate = 3-(imidazol-4-yl)-2-oxopropyl phosphate + L-glutamate. It functions in the pathway amino-acid biosynthesis; L-histidine biosynthesis; L-histidine from 5-phospho-alpha-D-ribose 1-diphosphate: step 7/9. This is Histidinol-phosphate aminotransferase 1 from Legionella pneumophila (strain Paris).